Here is a 109-residue protein sequence, read N- to C-terminus: Large ribosomal subunit protein uL24 (109 aa).

The protein belongs to the universal ribosomal protein uL24 family. As to quaternary structure, part of the 50S ribosomal subunit.

One of two assembly initiator proteins, it binds directly to the 5'-end of the 23S rRNA, where it nucleates assembly of the 50S subunit. In terms of biological role, one of the proteins that surrounds the polypeptide exit tunnel on the outside of the subunit. This is Large ribosomal subunit protein uL24 from Hamiltonella defensa subsp. Acyrthosiphon pisum (strain 5AT).